Reading from the N-terminus, the 624-residue chain is LRR receptor kinase BAK1 (624 aa).

The signal sequence occupies residues M1–A25. Residues N26–G237 lie on the Extracellular side of the membrane. LRR repeat units follow at residues L91–L115, N117–L139, L140–I163, and T164–L188. Residues N103, N114, N127, N149, and N175 are each glycosylated (N-linked (GlcNAc...) asparagine). The tract at residues T205–T236 is disordered. The segment covering P210 to V227 has biased composition (pro residues). Residues A238 to F258 form a helical membrane-spanning segment. Residues A259–R624 lie on the Cytoplasmic side of the membrane. One can recognise a Protein kinase domain in the interval F301–Q588. ATP-binding positions include L307–V315 and K329. The active-site Proton acceptor is D428.

It belongs to the protein kinase superfamily. Ser/Thr protein kinase family. As to quaternary structure, forms homodimers. Interacts with BRI1. Interacts with REM4.1.

The protein localises to the cell membrane. It catalyses the reaction L-seryl-[protein] + ATP = O-phospho-L-seryl-[protein] + ADP + H(+). It carries out the reaction L-threonyl-[protein] + ATP = O-phospho-L-threonyl-[protein] + ADP + H(+). Functionally, LRR receptor kinase involved in defense response. Does not seem to be required specifically for XA21-mediated immunity or basal resistance to Xanthomonas oryzae pv. oryzae (Xoo), or immunity to Magnaporthe oryzae. Involved in brassinosteroid (BR) signaling pathway. Acts as a coreceptor of BRI1. Forms at the plasma membrane a receptor complex with BRI1 which is activated in response to brassinolide. Phosphorylates BRI1. Required for normal plant growth and leaf development. Possesses kinase activity in vitro. The protein is LRR receptor kinase BAK1 of Oryza sativa subsp. indica (Rice).